We begin with the raw amino-acid sequence, 187 residues long: MNETQIQRETRQVVEDVLEKTNLKQGALFVLGLSSSEVLGGQIGKESSQEIGELIVETILGILSSRGIHLAVQGCEHVNRALVVERQVAEQFGLEIVSVHPTLHAGGSGQLAAFKFMQDPVEVEFIKAHAGLDIGDTAIGMHVKHVQVPIRPILREIGHAHVTALASRPKLIGGARAHYPQDAIRKS.

It belongs to the UPF0340 family.

In Streptococcus pneumoniae (strain 70585), this protein is UPF0340 protein SP70585_0722.